Reading from the N-terminus, the 808-residue chain is Glycerol-3-phosphate acyltransferase (808 aa).

Positions 306–311 (HRSHMD) match the HXXXXD motif motif.

The protein belongs to the GPAT/DAPAT family.

The protein resides in the cell inner membrane. It catalyses the reaction sn-glycerol 3-phosphate + an acyl-CoA = a 1-acyl-sn-glycero-3-phosphate + CoA. It participates in phospholipid metabolism; CDP-diacylglycerol biosynthesis; CDP-diacylglycerol from sn-glycerol 3-phosphate: step 1/3. The chain is Glycerol-3-phosphate acyltransferase from Vibrio parahaemolyticus serotype O3:K6 (strain RIMD 2210633).